The chain runs to 159 residues: Peptide methionine sulfoxide reductase MsrB (159 aa).

The MsrB domain occupies 22–144 (RERLEANLTA…NSVSLQFVKA (123 aa)). Residues C61, C64, C110, and C113 each contribute to the Zn(2+) site. C133 serves as the catalytic Nucleophile.

Belongs to the MsrB Met sulfoxide reductase family. Requires Zn(2+) as cofactor.

It catalyses the reaction L-methionyl-[protein] + [thioredoxin]-disulfide + H2O = L-methionyl-(R)-S-oxide-[protein] + [thioredoxin]-dithiol. The protein is Peptide methionine sulfoxide reductase MsrB of Caulobacter vibrioides (strain ATCC 19089 / CIP 103742 / CB 15) (Caulobacter crescentus).